A 151-amino-acid chain; its full sequence is Group 10 secretory phospholipase A2 (151 aa).

The first 17 residues, methionine 1–serine 17, serve as a signal peptide directing secretion. The propeptide occupies glutamate 18–arginine 28. 8 disulfides stabilise this stretch: cysteine 39–cysteine 97, cysteine 53–cysteine 143, cysteine 55–cysteine 71, cysteine 70–cysteine 125, cysteine 76–cysteine 150, cysteine 77–cysteine 118, cysteine 86–cysteine 111, and cysteine 104–cysteine 116. Residues tyrosine 54, glycine 56, and glycine 58 each coordinate Ca(2+). Histidine 74 is an active-site residue. Aspartate 75 is a binding site for Ca(2+). The active site involves aspartate 119.

This sequence belongs to the phospholipase A2 family. As to quaternary structure, interacts with PLA2R1; this interaction mediates PLA2G10 clearance and inactivation. The cofactor is Ca(2+).

Its subcellular location is the secreted. The protein localises to the lysosome. It localises to the cytoplasmic vesicle. The protein resides in the secretory vesicle. It is found in the acrosome. It carries out the reaction a 1,2-diacyl-sn-glycero-3-phosphocholine + H2O = a 1-acyl-sn-glycero-3-phosphocholine + a fatty acid + H(+). It catalyses the reaction 1-hexadecanoyl-2-(9Z-octadecenoyl)-sn-glycero-3-phosphocholine + H2O = 1-hexadecanoyl-sn-glycero-3-phosphocholine + (9Z)-octadecenoate + H(+). The enzyme catalyses 1-octadecanoyl-2-(5Z,8Z,11Z,14Z-eicosatetraenoyl)-sn-glycero-3-phosphocholine + H2O = 1-octadecanoyl-sn-glycero-3-phosphocholine + (5Z,8Z,11Z,14Z)-eicosatetraenoate + H(+). The catalysed reaction is 1,2-dihexadecanoyl-sn-glycero-3-phosphocholine + H2O = 1-hexadecanoyl-sn-glycero-3-phosphocholine + hexadecanoate + H(+). It carries out the reaction 1-hexadecanoyl-2-(9Z-octadecenoyl)-sn-glycero-3-phosphoglycerol + H2O = 1-hexadecanoyl-sn-glycero-3-phosphoglycerol + (9Z)-octadecenoate + H(+). It catalyses the reaction 1,2-dihexadecanoyl-sn-glycero-3-phospho-(1'-sn-glycerol) + H2O = 1-hexadecanoyl-sn-glycero-3-phospho-(1'-sn-glycerol) + hexadecanoate + H(+). The enzyme catalyses 1-hexadecanoyl-2-(9Z-octadecenoyl)-sn-glycero-3-phospho-L-serine + H2O = 1-hexadecanoyl-sn-glycero-3-phospho-L-serine + (9Z)-octadecenoate + H(+). The catalysed reaction is 1-hexadecanoyl-2-(9Z,12Z-octadecadienoyl)-sn-glycero-3-phosphoethanolamine + H2O = 1-hexadecanoyl-sn-glycero-3-phosphoethanolamine + (9Z,12Z)-octadecadienoate + H(+). It carries out the reaction 1-hexadecanoyl-2-(9Z-octadecenoyl)-sn-glycero-3-phosphate + H2O = 1-hexadecanoyl-sn-glycero-3-phosphate + (9Z)-octadecenoate + H(+). It catalyses the reaction 1-O-hexadecyl-2-acetyl-sn-glycero-3-phosphocholine + H2O = 1-O-hexadecyl-sn-glycero-3-phosphocholine + acetate + H(+). Secretory calcium-dependent phospholipase A2 that primarily targets extracellular phospholipids. Hydrolyzes the ester bond of the fatty acyl group attached at sn-2 position of phospholipids with preference for phosphatidylcholines and phosphatidylglycerols over phosphatidylethanolamines. Preferentially releases sn-2 omega-6 and omega-3 polyunsaturated fatty acyl (PUFA) chains over saturated fatty acyls. Contributes to phospholipid remodeling of very low-density lipoprotein (VLDL), low-density lipoprotein (LDL) and high-density lipoprotein (HDL) particles. Hydrolyzes LDL phospholipids releasing unsaturated fatty acids that regulate macrophage differentiation toward foam cells. Efficiently hydrolyzes and inactivates platelet activating factor (PAF), a potent lipid mediator present in oxidized LDL. May act in an autocrine and paracrine manner. Secreted by lung epithelium, targets membrane phospholipids of infiltrating eosinophils, releasing arachidonate and boosting eicosanoid and cysteinyl leukotriene synthesis involved in airway inflammatory response. Secreted by gut epithelium, hydrolyzes dietary and biliary phosphatidylcholines in the gastrointestinal lumen. Plays a stem cell regulator role in colon epithelium. Within intracellular compartment, mediates Paneth-like cell differentiation and its stem cell supporting functions by inhibiting the Wnt signaling pathway in intestinal stem cell (ISC). Secreted in the intestinal lumen upon inflammation, acts in an autocrine way and promotes prostaglandin E2 synthesis that stimulates Wnt signaling pathway in ISCs and tissue regeneration. May participate in hair follicle morphogenesis by regulating phosphatidylethanolamines metabolism at the outermost epithelial layer and facilitating melanin synthesis. By releasing lysophosphatidylcholines (LPCs) at sperm acrosome, controls sperm cell capacitation, acrosome reaction and overall fertility. May promote neurite outgrowth in neuron fibers involved in nociception. Contributes to lipid remodeling of cellular membranes and generation of lipid mediators involved in pathogen clearance. Cleaves sn-2 fatty acyl chains of phosphatidylglycerols and phosphatidylethanolamines, which are major components of membrane phospholipids in bacteria. Displays bactericidal activity against Gram-positive bacteria by directly hydrolyzing phospholipids of the bacterial membrane. In pulmonary epithelium, may contribute to host defense response against adenoviral infection. Prevents adenovirus entry into host cells by hydrolyzing host cell plasma membrane, releasing C16:0 LPCs that inhibit virus-mediated membrane fusion and viral infection. Likely prevents adenoviral entry into the endosomes of host cells. May play a role in maturation and activation of innate immune cells including macrophages, group 2 innate lymphoid cells and mast cells. This is Group 10 secretory phospholipase A2 (Pla2g10) from Rattus norvegicus (Rat).